The primary structure comprises 170 residues: Endoribonuclease YbeY (170 aa).

Zn(2+)-binding residues include H118, H122, and H128.

It belongs to the endoribonuclease YbeY family. The cofactor is Zn(2+).

Its subcellular location is the cytoplasm. Functionally, single strand-specific metallo-endoribonuclease involved in late-stage 70S ribosome quality control and in maturation of the 3' terminus of the 16S rRNA. This is Endoribonuclease YbeY from Mycobacteroides abscessus (strain ATCC 19977 / DSM 44196 / CCUG 20993 / CIP 104536 / JCM 13569 / NCTC 13031 / TMC 1543 / L948) (Mycobacterium abscessus).